The following is a 122-amino-acid chain: Thioredoxin H-type (122 aa).

The region spanning 2 to 118 (AAEEGVVIAC…IVKHVGATAA (117 aa)) is the Thioredoxin domain. An intrachain disulfide couples Cys40 to Cys43.

It is found in the cytoplasm. Participates in various redox reactions through the reversible oxidation of the active center dithiol to a disulfide. The H form is known to activate a number of cytosolic enzymes. This Oryza sativa subsp. indica (Rice) protein is Thioredoxin H-type (TRXH).